The following is a 434-amino-acid chain: Adenylosuccinate synthetase (434 aa).

GTP contacts are provided by residues 22–28 (GDEGKGK) and 50–52 (GHT). Asp23 serves as the catalytic Proton acceptor. 2 residues coordinate Mg(2+): Asp23 and Gly50. IMP contacts are provided by residues 23–26 (DEGK), 48–51 (NAGH), Thr139, Arg153, Gln234, Thr249, and Arg313. Residue His51 is the Proton donor of the active site. Substrate is bound at residue 309 to 315 (ATTGRKR). Residues Arg315, 341–343 (KLD), and 423–425 (SVG) each bind GTP.

The protein belongs to the adenylosuccinate synthetase family. As to quaternary structure, homodimer. The cofactor is Mg(2+).

It localises to the cytoplasm. It carries out the reaction IMP + L-aspartate + GTP = N(6)-(1,2-dicarboxyethyl)-AMP + GDP + phosphate + 2 H(+). Its pathway is purine metabolism; AMP biosynthesis via de novo pathway; AMP from IMP: step 1/2. Functionally, plays an important role in the de novo pathway of purine nucleotide biosynthesis. Catalyzes the first committed step in the biosynthesis of AMP from IMP. In Chlorobium phaeovibrioides (strain DSM 265 / 1930) (Prosthecochloris vibrioformis (strain DSM 265)), this protein is Adenylosuccinate synthetase.